The chain runs to 289 residues: Acetyl-coenzyme A carboxylase carboxyl transferase subunit beta (289 aa).

The CoA carboxyltransferase N-terminal domain maps to 34 to 289 (MWVKCNKCGE…KLINMHQNSF (256 aa)). Residues Cys38, Cys41, Cys57, and Cys60 each coordinate Zn(2+). Residues 38–60 (CNKCGEILYQNDLEKNYMVCNLC) form a C4-type zinc finger.

This sequence belongs to the AccD/PCCB family. In terms of assembly, acetyl-CoA carboxylase is a heterohexamer composed of biotin carboxyl carrier protein (AccB), biotin carboxylase (AccC) and two subunits each of ACCase subunit alpha (AccA) and ACCase subunit beta (AccD). Zn(2+) is required as a cofactor.

It localises to the cytoplasm. It carries out the reaction N(6)-carboxybiotinyl-L-lysyl-[protein] + acetyl-CoA = N(6)-biotinyl-L-lysyl-[protein] + malonyl-CoA. The protein operates within lipid metabolism; malonyl-CoA biosynthesis; malonyl-CoA from acetyl-CoA: step 1/1. In terms of biological role, component of the acetyl coenzyme A carboxylase (ACC) complex. Biotin carboxylase (BC) catalyzes the carboxylation of biotin on its carrier protein (BCCP) and then the CO(2) group is transferred by the transcarboxylase to acetyl-CoA to form malonyl-CoA. This Clostridium botulinum (strain Kyoto / Type A2) protein is Acetyl-coenzyme A carboxylase carboxyl transferase subunit beta.